Here is a 1001-residue protein sequence, read N- to C-terminus: uncharacterized protein (1001 aa).

A compositionally biased stretch (basic and acidic residues) spans 939 to 948; the sequence is KVVDNKRDAS. The disordered stretch occupies residues 939 to 1001; the sequence is KVVDNKRDAS…HTSKRVQKKN (63 aa). Phosphoserine occurs at positions 948 and 950.

This is an uncharacterized protein from Schizosaccharomyces pombe (strain 972 / ATCC 24843) (Fission yeast).